The following is a 277-amino-acid chain: Putative acetylornithine deacetylase (277 aa).

The catalysed reaction is N(2)-acetyl-L-ornithine + H2O = L-ornithine + acetate. The protein operates within amino-acid biosynthesis; L-arginine biosynthesis; L-ornithine from N(2)-acetyl-L-ornithine (linear): step 1/1. The sequence is that of Putative acetylornithine deacetylase (argE) from Leptospira biflexa.